We begin with the raw amino-acid sequence, 243 residues long: NAD-dependent protein deacetylase (243 aa).

The region spanning methionine 1–glutamate 243 is the Deacetylase sirtuin-type domain. Positions 24, 35, 36, 105, 107, 108, and 123 each coordinate NAD(+). A nicotinamide-binding site is contributed by phenylalanine 35. Nicotinamide-binding residues include isoleucine 107 and aspartate 108. Histidine 123 functions as the Proton acceptor in the catalytic mechanism. Zn(2+) contacts are provided by cysteine 131, cysteine 134, cysteine 151, and cysteine 154. Serine 192, serine 193, asparagine 215, and aspartate 232 together coordinate NAD(+).

Belongs to the sirtuin family. Class U subfamily. Requires Zn(2+) as cofactor.

The protein localises to the cytoplasm. The catalysed reaction is N(6)-acetyl-L-lysyl-[protein] + NAD(+) + H2O = 2''-O-acetyl-ADP-D-ribose + nicotinamide + L-lysyl-[protein]. In terms of biological role, NAD-dependent protein deacetylase which modulates the activities of several enzymes which are inactive in their acetylated form. This chain is NAD-dependent protein deacetylase, found in Staphylococcus aureus (strain NCTC 8325 / PS 47).